Here is a 132-residue protein sequence, read N- to C-terminus: Acyl carrier protein 3, chloroplastic (132 aa).

The N-terminal 49 residues, 1-49 (MASIAGSAVSFAKPVKAINTNSLSFSGARRGNAFLRLQPVPMRFAVCCS), are a transit peptide targeting the chloroplast. Residues 52-127 (QDTVEKVCEI…DAATLIDKLV (76 aa)) enclose the Carrier domain. Ser-87 carries the post-translational modification O-(pantetheine 4'-phosphoryl)serine.

This sequence belongs to the acyl carrier protein (ACP) family. Post-translationally, 4'-phosphopantetheine is transferred from CoA to a specific serine of apo-ACP by acpS. This modification is essential for activity because fatty acids are bound in thioester linkage to the sulfhydryl of the prosthetic group.

Its subcellular location is the plastid. It localises to the chloroplast. Its pathway is lipid metabolism; fatty acid biosynthesis. Carrier of the growing fatty acid chain in fatty acid biosynthesis. This is Acyl carrier protein 3, chloroplastic (ACL1.3) from Hordeum vulgare (Barley).